The primary structure comprises 400 residues: Hyaluronan and proteoglycan link protein 4 (400 aa).

Positions 1–30 (MACAPGALGHRALWAVAWGLLLLVPVLAGA) are cleaved as a signal peptide. Residues 47–155 (SVVVQTAPGQ…VTNELEDDVG (109 aa)) enclose the Ig-like C2-type domain. 5 disulfides stabilise this stretch: C69–C144, C186–C264, C210–C231, C291–C361, and C316–C337. Residue N133 is glycosylated (N-linked (GlcNAc...) asparagine). Link domains lie at 164 to 266 (VVFP…FCFT) and 271 to 363 (GRVF…YCYR).

Belongs to the HAPLN family. In terms of tissue distribution, expressed predominantly in brain where it is found mainly throughout the midbrain and hindbrain in a perineuronal net pattern.

The protein resides in the secreted. It is found in the extracellular space. It localises to the extracellular matrix. In terms of biological role, essential for the proper localization of brevican (BCAN), mainly as a perineuronal nets (PNNs)-type deposition in the brainstem and cerebellum thereby playing a key role in the formation and structural organization of PNNs. Contributes to the formation and transmission of inhibitory GABAergic synapses between Purkinje cells and deep cerebellar nuclei neurons. This Mus musculus (Mouse) protein is Hyaluronan and proteoglycan link protein 4 (Hapln4).